The chain runs to 124 residues: Large ribosomal subunit protein bL12 (124 aa).

Belongs to the bacterial ribosomal protein bL12 family. In terms of assembly, homodimer. Part of the ribosomal stalk of the 50S ribosomal subunit. Forms a multimeric L10(L12)X complex, where L10 forms an elongated spine to which 2 to 4 L12 dimers bind in a sequential fashion. Binds GTP-bound translation factors.

Functionally, forms part of the ribosomal stalk which helps the ribosome interact with GTP-bound translation factors. Is thus essential for accurate translation. The polypeptide is Large ribosomal subunit protein bL12 (Borreliella afzelii (strain PKo) (Borrelia afzelii)).